We begin with the raw amino-acid sequence, 633 residues long: Pescadillo homolog (633 aa).

Residues 321-414 (RLRTLFKGLK…QLLPTNKYFL (94 aa)) enclose the BRCT domain. 2 disordered regions span residues 450–470 (HAQS…DTVE) and 490–567 (KKYG…LQAR). Phosphoserine is present on residues S453 and S457. Composition is skewed to acidic residues over residues 454–470 (EDES…DTVE) and 498–526 (VNED…EELD). The span at 527–538 (EKEKRLLEEKQK) shows a compositional bias: basic and acidic residues. Residues 545–554 (KVHKVNKRQV) are compositionally biased toward basic residues. The span at 555-564 (HKAEVDEHRL) shows a compositional bias: basic and acidic residues. The stretch at 593 to 626 (LLRKKRRTIETDAKEAKKLAKREARKAAAAAAAA) forms a coiled coil.

The protein belongs to the pescadillo family.

The protein resides in the nucleus. The protein localises to the nucleolus. Its subcellular location is the nucleoplasm. Functionally, required for maturation of ribosomal RNAs and formation of the large ribosomal subunit. This Drosophila virilis (Fruit fly) protein is Pescadillo homolog.